The following is a 286-amino-acid chain: 4-diphosphocytidyl-2-C-methyl-D-erythritol kinase (286 aa).

Residue lysine 10 is part of the active site. Residue 100-110 coordinates ATP; the sequence is PMGSGLGGGSS. Aspartate 142 is a catalytic residue.

This sequence belongs to the GHMP kinase family. IspE subfamily. Homodimer.

The enzyme catalyses 4-CDP-2-C-methyl-D-erythritol + ATP = 4-CDP-2-C-methyl-D-erythritol 2-phosphate + ADP + H(+). It participates in isoprenoid biosynthesis; isopentenyl diphosphate biosynthesis via DXP pathway; isopentenyl diphosphate from 1-deoxy-D-xylulose 5-phosphate: step 3/6. Its function is as follows. Catalyzes the phosphorylation of the position 2 hydroxy group of 4-diphosphocytidyl-2C-methyl-D-erythritol. This Buchnera aphidicola subsp. Acyrthosiphon pisum (strain APS) (Acyrthosiphon pisum symbiotic bacterium) protein is 4-diphosphocytidyl-2-C-methyl-D-erythritol kinase.